Here is a 285-residue protein sequence, read N- to C-terminus: MKVFILALLALTATTAIAQLETTCSQGFGQYQQQQQPGQRQLLEQMKPCVAFLQQQCRPLRMPFLQTQVEQLSSCQIVQHQCCQQLAQIPERIRCHAIHSVVEAIMQQQSQQQWQERQQQAQHKSMRMLLENLSLMCNIYVPVQCQQQQQMGQQQQQQQLQEQLTPCATFLQHQCSPVTVPFPQIPVDQPTSCQNVQHQCCRQLSQIPEQFRCQAIHNVAEAIRQQQPQQQWQGMYQPQQPAQHESIRMSLQALRSMCNIYIPVQCPAPTAYNIPMVATCTSGAC.

An N-terminal signal peptide occupies residues 1 to 18 (MKVFILALLALTATTAIA).

The protein belongs to the prolamin family. Contains disulfide bonds.

In terms of biological role, seed storage protein. Might be integrated via inter-chain disulfide bonds within the glutenin polymer. The chain is Avenin-like b1 (AVNLB) from Triticum aestivum (Wheat).